Here is a 133-residue protein sequence, read N- to C-terminus: Phosphoribosyl-AMP cyclohydrolase (133 aa).

Residue Asp-77 coordinates Mg(2+). Cys-78 contacts Zn(2+). Residues Asp-79 and Asp-81 each coordinate Mg(2+). 2 residues coordinate Zn(2+): Cys-95 and Cys-102.

Belongs to the PRA-CH family. As to quaternary structure, homodimer. The cofactor is Mg(2+). It depends on Zn(2+) as a cofactor.

It localises to the cytoplasm. It carries out the reaction 1-(5-phospho-beta-D-ribosyl)-5'-AMP + H2O = 1-(5-phospho-beta-D-ribosyl)-5-[(5-phospho-beta-D-ribosylamino)methylideneamino]imidazole-4-carboxamide. It functions in the pathway amino-acid biosynthesis; L-histidine biosynthesis; L-histidine from 5-phospho-alpha-D-ribose 1-diphosphate: step 3/9. In terms of biological role, catalyzes the hydrolysis of the adenine ring of phosphoribosyl-AMP. This is Phosphoribosyl-AMP cyclohydrolase from Pseudomonas fluorescens (strain Pf0-1).